The chain runs to 81 residues: MKAPATIVILIMSLISVLWATADTEDGNLLFPIEDFIRKFDEYPVQPKERSCKLTFWRCKKDKECCGWNICTGLCIPPGKK.

Residues 1–24 (MKAPATIVILIMSLISVLWATADT) form the signal peptide. Residues 25 to 50 (EDGNLLFPIEDFIRKFDEYPVQPKER) constitute a propeptide that is removed on maturation. Intrachain disulfides connect Cys52–Cys66, Cys59–Cys71, and Cys65–Cys75. Pro78 is subject to Proline amide.

Expressed by the venom gland.

The protein localises to the secreted. In terms of biological role, blocks voltage-gated sodium channels (Nav). Intracranial injection into mice causes lacrimation, slow breathing and death. Intrathorax injection into crickets causes death. This is U12-hexatoxin-Mg1a from Macrothele gigas (Japanese funnel web spider).